Reading from the N-terminus, the 118-residue chain is Transcriptional regulator WhiB4 (118 aa).

One can recognise a 4Fe-4S Wbl-type domain in the interval 36-92; it reads LCRTTDPDELFVRGAAQRKAAVICRHCPVMQECAADALDNKVEFGVWGGMTERQRRA. Residues cysteine 37, cysteine 59, cysteine 62, and cysteine 68 each coordinate [4Fe-4S] cluster. 2 cysteine pairs are disulfide-bonded: cysteine 37/cysteine 68 and cysteine 59/cysteine 62.

This sequence belongs to the WhiB family. The cofactor is [4Fe-4S] cluster. In terms of processing, the Fe-S cluster can be nitrosylated by nitric oxide (NO). Post-translationally, upon Fe-S cluster removal intramolecular disulfide bonds are formed.

It is found in the cytoplasm. In terms of biological role, acts as a transcriptional regulator. Probably redox-responsive. The apo- but not holo-form probably binds DNA. This is Transcriptional regulator WhiB4 (whiB4) from Mycobacterium tuberculosis (strain CDC 1551 / Oshkosh).